The chain runs to 95 residues: Aspartyl/glutamyl-tRNA(Asn/Gln) amidotransferase subunit C (95 aa).

This sequence belongs to the GatC family. In terms of assembly, heterotrimer of A, B and C subunits.

The catalysed reaction is L-glutamyl-tRNA(Gln) + L-glutamine + ATP + H2O = L-glutaminyl-tRNA(Gln) + L-glutamate + ADP + phosphate + H(+). It carries out the reaction L-aspartyl-tRNA(Asn) + L-glutamine + ATP + H2O = L-asparaginyl-tRNA(Asn) + L-glutamate + ADP + phosphate + 2 H(+). Allows the formation of correctly charged Asn-tRNA(Asn) or Gln-tRNA(Gln) through the transamidation of misacylated Asp-tRNA(Asn) or Glu-tRNA(Gln) in organisms which lack either or both of asparaginyl-tRNA or glutaminyl-tRNA synthetases. The reaction takes place in the presence of glutamine and ATP through an activated phospho-Asp-tRNA(Asn) or phospho-Glu-tRNA(Gln). This chain is Aspartyl/glutamyl-tRNA(Asn/Gln) amidotransferase subunit C, found in Bradyrhizobium sp. (strain ORS 278).